The sequence spans 65 residues: Large ribosomal subunit protein uL29 (65 aa).

This sequence belongs to the universal ribosomal protein uL29 family.

The chain is Large ribosomal subunit protein uL29 from Xylella fastidiosa (strain Temecula1 / ATCC 700964).